A 561-amino-acid chain; its full sequence is Dihydroxy-acid dehydratase (561 aa).

Cys-50 lines the [2Fe-2S] cluster pocket. Asp-82 contributes to the Mg(2+) binding site. Cys-123 is a [2Fe-2S] cluster binding site. Asp-124 and Lys-125 together coordinate Mg(2+). At Lys-125 the chain carries N6-carboxylysine. Cys-195 is a [2Fe-2S] cluster binding site. Mg(2+) is bound at residue Glu-447. The Proton acceptor role is filled by Ser-473.

The protein belongs to the IlvD/Edd family. As to quaternary structure, homodimer. The cofactor is [2Fe-2S] cluster. It depends on Mg(2+) as a cofactor.

The catalysed reaction is (2R)-2,3-dihydroxy-3-methylbutanoate = 3-methyl-2-oxobutanoate + H2O. It catalyses the reaction (2R,3R)-2,3-dihydroxy-3-methylpentanoate = (S)-3-methyl-2-oxopentanoate + H2O. Its pathway is amino-acid biosynthesis; L-isoleucine biosynthesis; L-isoleucine from 2-oxobutanoate: step 3/4. It participates in amino-acid biosynthesis; L-valine biosynthesis; L-valine from pyruvate: step 3/4. Functions in the biosynthesis of branched-chain amino acids. Catalyzes the dehydration of (2R,3R)-2,3-dihydroxy-3-methylpentanoate (2,3-dihydroxy-3-methylvalerate) into 2-oxo-3-methylpentanoate (2-oxo-3-methylvalerate) and of (2R)-2,3-dihydroxy-3-methylbutanoate (2,3-dihydroxyisovalerate) into 2-oxo-3-methylbutanoate (2-oxoisovalerate), the penultimate precursor to L-isoleucine and L-valine, respectively. The protein is Dihydroxy-acid dehydratase of Trichodesmium erythraeum (strain IMS101).